Reading from the N-terminus, the 344-residue chain is Dimethyladenosine transferase 1, mitochondrial (344 aa).

Residues 1 to 27 constitute a mitochondrion transit peptide; that stretch reads MATPGALAKFRLPPLPTIGEIVKLFNL. Residues Asn36, Leu38, Gly63, Glu85, Lys86, Asp111, Ile112, and Asn141 each contribute to the S-adenosyl-L-methionine site.

It belongs to the class I-like SAM-binding methyltransferase superfamily. rRNA adenine N(6)-methyltransferase family. KsgA subfamily.

It is found in the mitochondrion. The enzyme catalyses adenosine(N)/adenosine(N+1) in rRNA + 4 S-adenosyl-L-methionine = N(6)-dimethyladenosine(N)/N(6)-dimethyladenosine(N+1) in rRNA + 4 S-adenosyl-L-homocysteine + 4 H(+). In terms of biological role, mitochondrial methyltransferase which uses S-adenosyl methionine to dimethylate two highly conserved adjacent adenosine residues (A1583 and A1584) within the loop of helix 45 at the 3-prime end of 12S rRNA, thereby regulating the assembly or stability of the small subunit of the mitochondrial ribosome. Also required for basal transcription of mitochondrial DNA, probably via its interaction with POLRMT and TFAM. Stimulates transcription independently of the methyltransferase activity. The polypeptide is Dimethyladenosine transferase 1, mitochondrial (tfb1m.L) (Xenopus laevis (African clawed frog)).